A 160-amino-acid polypeptide reads, in one-letter code: MLTIKRYPGAIEFTVHTSKSYGTQMFALCFISFVIGATSLAIGRSPKIIITLVELSFLLSLFHIISGVNHESLFVIRDLGVQTNCHSIVPWKSSSKLIPLDSIRDIFINEGFRKFDVCYYMGIAIESETEIHVVFPTLLPRHDVLQKVYKETVILLANNS.

Transmembrane regions (helical) follow at residues 22-42 and 48-68; these read GTQM…SLAI and IIIT…ISGV.

This sequence belongs to the PIGH family.

Its subcellular location is the endoplasmic reticulum membrane. It carries out the reaction a 1,2-diacyl-sn-glycero-3-phospho-(1D-myo-inositol) + UDP-N-acetyl-alpha-D-glucosamine = a 6-(N-acetyl-alpha-D-glucosaminyl)-1-(1,2-diacyl-sn-glycero-3-phospho)-1D-myo-inositol + UDP + H(+). The protein operates within glycolipid biosynthesis; glycosylphosphatidylinositol-anchor biosynthesis. Functionally, part of the complex catalyzing the transfer of N-acetylglucosamine from UDP-N-acetylglucosamine to phosphatidylinositol, the first step of GPI biosynthesis. This Schizosaccharomyces pombe (strain 972 / ATCC 24843) (Fission yeast) protein is Phosphatidylinositol N-acetylglucosaminyltransferase subunit gpi15 (gpi15).